The following is a 606-amino-acid chain: ATP-dependent rRNA helicase spb4 (606 aa).

The Q motif signature appears at 1-29; it reads MSFQSINIDKWLKNAVAAQGFKKMTPVQA. One can recognise a Helicase ATP-binding domain in the interval 32-213; that stretch reads IPLFLKNKDL…KIAGLRNSVR (182 aa). 45–52 contacts ATP; sequence AVTGSGKT. Residues 161 to 164 carry the DEAD box motif; it reads DEAD. The region spanning 246–400 is the Helicase C-terminal domain; it reads CMIHLLCTIE…ALDLSRLKVL (155 aa). Positions 521-574 are disordered; that stretch reads KQKEVKEKRNTRREKRKSKKEFLKAQKNEASNNLKQEIVSKAGAQETENDDLID. Residues 521–601 adopt a coiled-coil conformation; sequence KQKEVKEKRN…KSKKRKNQAS (81 aa). Residues 529-539 are compositionally biased toward basic residues; that stretch reads RNTRREKRKSK.

Belongs to the DEAD box helicase family. DDX55/SPB4 subfamily. In terms of assembly, component of pre-60S ribosomal complexes.

Its subcellular location is the nucleus. It is found in the nucleolus. The enzyme catalyses ATP + H2O = ADP + phosphate + H(+). Functionally, ATP-binding RNA helicase involved in the biogenesis of 60S ribosomal subunits. Binds 90S pre-ribosomal particles and dissociates from pre-60S ribosomal particles after processing of 27SB pre-rRNA. Required for the normal formation of 18S rRNA through the processing of pre-rRNAs at sites A0, A1 and A2, and the normal formation of 25S and 5.8S rRNAs through the processing of pre-rRNAs at sites C1 and C2. This is ATP-dependent rRNA helicase spb4 from Schizosaccharomyces pombe (strain 972 / ATCC 24843) (Fission yeast).